A 136-amino-acid polypeptide reads, in one-letter code: Fatty acid-binding protein homolog 5 (136 aa).

Residues Arg111 and 131-133 (RAY) each bind a fatty acid.

This sequence belongs to the calycin superfamily. Fatty-acid binding protein (FABP) family.

This Caenorhabditis elegans protein is Fatty acid-binding protein homolog 5 (lbp-5).